A 164-amino-acid polypeptide reads, in one-letter code: Transcriptional repressor NrdR (164 aa).

A zinc finger lies at 3-34; it reads CPKCNYHKSSVVDSRQAEDGNTIRRRRECEQC. One can recognise an ATP-cone domain in the interval 49–139; that stretch reads LLVIKKDGTR…VYKSFKDVDE (91 aa).

The protein belongs to the NrdR family. Zn(2+) serves as cofactor.

Functionally, negatively regulates transcription of bacterial ribonucleotide reductase nrd genes and operons by binding to NrdR-boxes. The sequence is that of Transcriptional repressor NrdR from Streptococcus pyogenes serotype M5 (strain Manfredo).